Consider the following 220-residue polypeptide: Peptidyl-tRNA hydrolase (220 aa).

Y14 provides a ligand contact to tRNA. The active-site Proton acceptor is H19. Residues F60, N62, and N106 each coordinate tRNA.

This sequence belongs to the PTH family. Monomer.

The protein localises to the cytoplasm. The catalysed reaction is an N-acyl-L-alpha-aminoacyl-tRNA + H2O = an N-acyl-L-amino acid + a tRNA + H(+). Hydrolyzes ribosome-free peptidyl-tRNAs (with 1 or more amino acids incorporated), which drop off the ribosome during protein synthesis, or as a result of ribosome stalling. Functionally, catalyzes the release of premature peptidyl moieties from peptidyl-tRNA molecules trapped in stalled 50S ribosomal subunits, and thus maintains levels of free tRNAs and 50S ribosomes. The polypeptide is Peptidyl-tRNA hydrolase (Campylobacter hominis (strain ATCC BAA-381 / DSM 21671 / CCUG 45161 / LMG 19568 / NCTC 13146 / CH001A)).